The chain runs to 421 residues: Cell division protein FtsA (421 aa).

It belongs to the FtsA/MreB family. As to quaternary structure, self-interacts. Interacts with FtsZ.

The protein resides in the cell membrane. Functionally, cell division protein that is involved in the assembly of the Z ring. May serve as a membrane anchor for the Z ring. The sequence is that of Cell division protein FtsA from Buchnera aphidicola subsp. Baizongia pistaciae (strain Bp).